The following is a 622-amino-acid chain: Chaperone protein HscA homolog (622 aa).

It belongs to the heat shock protein 70 family.

Functionally, chaperone involved in the maturation of iron-sulfur cluster-containing proteins. Has a low intrinsic ATPase activity which is markedly stimulated by HscB. This Burkholderia multivorans (strain ATCC 17616 / 249) protein is Chaperone protein HscA homolog.